Reading from the N-terminus, the 78-residue chain is Translational regulator CsrA (78 aa).

Belongs to the CsrA/RsmA family. As to quaternary structure, homodimer; the beta-strands of each monomer intercalate to form a hydrophobic core, while the alpha-helices form wings that extend away from the core.

The protein localises to the cytoplasm. In terms of biological role, a translational regulator that binds mRNA to regulate translation initiation and/or mRNA stability. Usually binds in the 5'-UTR at or near the Shine-Dalgarno sequence preventing ribosome-binding, thus repressing translation. Its main target seems to be the major flagellin gene, while its function is anatagonized by FliW. The sequence is that of Translational regulator CsrA from Borrelia turicatae (strain 91E135).